Here is a 118-residue protein sequence, read N- to C-terminus: HTH-type transcriptional regulator SarT (118 aa).

A DNA-binding region (H-T-H motif) is located at residues 55–78 (MRDIISYIGIDQSRIVKSVKDLSK).

This sequence belongs to the SarA family.

The protein resides in the cytoplasm. Its function is as follows. Transcriptional regulator acting as an intermediary between major regulators sarA and agr and virulence genes. Represses alpha-hemolysin (hla) gene expression. Down-regulates agr RNAIII expression by repressing sarU, a positive activator of agr expression. Up-regulates sarS, which induces the expression of the cell wall-associated protein A (spa). This Staphylococcus aureus (strain NCTC 8325 / PS 47) protein is HTH-type transcriptional regulator SarT (sarT).